The sequence spans 322 residues: Arginase (322 aa).

Residues histidine 113, aspartate 141, histidine 143, and aspartate 145 each coordinate Mn(2+). Substrate-binding positions include 143–147 (HADIN), 154–156 (SGN), and aspartate 200. Positions 247 and 249 each coordinate Mn(2+). Substrate-binding residues include threonine 261 and glutamate 292.

Belongs to the arginase family. As to quaternary structure, homotrimer. Mn(2+) is required as a cofactor.

It catalyses the reaction L-arginine + H2O = urea + L-ornithine. Its pathway is nitrogen metabolism; urea cycle; L-ornithine and urea from L-arginine: step 1/1. The sequence is that of Arginase (ARG) from Coccidioides immitis (strain RS) (Valley fever fungus).